Reading from the N-terminus, the 206-residue chain is Tumor protein D54 (206 aa).

At Met1 the chain carries N-acetylmethionine. A compositionally biased stretch (polar residues) spans 1–14 (MDSAGQDINLNSPN). Residues 1–24 (MDSAGQDINLNSPNKGLLSDSMTD) form a disordered region. Phosphoserine is present on residues Ser3, Ser12, Ser19, and Ser21. A coiled-coil region spans residues 38–82 (VEGLTEAEEEELRAELTKVEEEIVTLRQVLAAKERHCGELKRRLG). A phosphoserine mark is found at Ser96, Ser149, and Ser161. Thr163 bears the Phosphothreonine mark. Ser166 carries the phosphoserine modification. Thr173 is modified (phosphothreonine). Basic and acidic residues predominate over residues 175–185 (KSKVVGDRENG). Residues 175–206 (KSKVVGDRENGSDNLPSSAGSGDKPLSDPAPF) are disordered. Ser192 and Ser195 each carry phosphoserine.

Belongs to the TPD52 family. In terms of assembly, forms a homodimer or heterodimer with other members of the family. Interacts with MAL2.

This chain is Tumor protein D54 (TPD52L2), found in Homo sapiens (Human).